We begin with the raw amino-acid sequence, 311 residues long: Mitochondrial ribosome-associated GTPase 1 (311 aa).

A CP-type G domain is found at 27–200 (AKGLKQMKTK…LFDTPGVLSP (174 aa)). GTP is bound by residues 74–77 (NKMD), 144–149 (NVGKSS), and G196.

This sequence belongs to the TRAFAC class YlqF/YawG GTPase family. MTG1 subfamily.

Its subcellular location is the mitochondrion inner membrane. Its function is as follows. Plays a role in the regulation of the mitochondrial ribosome assembly and of translational activity. Displays mitochondrial GTPase activity. The protein is Mitochondrial ribosome-associated GTPase 1 of Xenopus tropicalis (Western clawed frog).